Consider the following 714-residue polypeptide: Probable serine/threonine-protein kinase mkcB (714 aa).

Basic residues predominate over residues 1 to 12; that stretch reads MKSILKKAKHFF. Disordered regions lie at residues 1 to 267 and 281 to 349; these read MKSI…SSTS and GSGS…EQKP. Over residues 23-35 the composition is skewed to basic and acidic residues; sequence GGEKTAKESESQQ. Positions 62-83 are enriched in low complexity; sequence SQSQPTTSALQTSTSLQPSSSL. Polar residues predominate over residues 84–94; sequence HQIPQSQSSLE. Low complexity-rich tracts occupy residues 95 to 111 and 120 to 166; these read LTTN…TKQL and PHSQ…TLTT. Polar residues predominate over residues 167–177; sequence PVPSSENLATL. Low complexity-rich tracts occupy residues 178–241 and 254–267; these read STST…QEQT and LSQS…SSTS. Polar residues predominate over residues 282–294; sequence SGSTKNKDSSSAP. Composition is skewed to low complexity over residues 300–314 and 324–337; these read NNNN…KNRS and NNNN…KNNN. Positions 438–687 constitute a Protein kinase domain; that stretch reads YKDSDQVGKG…AEELLKHPFI (250 aa). ATP contacts are provided by residues 444 to 452 and Lys467; that span reads VGKGGFGTV. The Proton acceptor role is filled by Asp558.

The protein belongs to the protein kinase superfamily. STE Ser/Thr protein kinase family. STE20 subfamily. Mg(2+) is required as a cofactor. Expressed at equal levels in prestalk and prespore cells.

The catalysed reaction is L-seryl-[protein] + ATP = O-phospho-L-seryl-[protein] + ADP + H(+). It carries out the reaction L-threonyl-[protein] + ATP = O-phospho-L-threonyl-[protein] + ADP + H(+). This Dictyostelium discoideum (Social amoeba) protein is Probable serine/threonine-protein kinase mkcB.